The following is a 326-amino-acid chain: Interleukin-1-binding protein (326 aa).

Positions 1-18 (MSILPVIFLSIFFYSSFV) are cleaved as a signal peptide. Ig-like domains are found at residues 24–115 (PECI…LNLT), 122–212 (SNID…RIVK), and 221–322 (PSTM…KTVT). A disulfide bridge links Cys48 with Cys99. Residues Asn80, Asn103, and Asn113 are each glycosylated (N-linked (GlcNAc...) asparagine; by host). The cysteines at positions 143 and 194 are disulfide-linked. N-linked (GlcNAc...) asparagine; by host glycans are attached at residues Asn206 and Asn237. Cys242 and Cys309 are disulfide-bonded.

This sequence belongs to the interleukin-1 receptor family. Interacts with mouse Il1b.

The protein localises to the secreted. In terms of biological role, may reduce the host inflammatory response by interacting with inteleukin-1 beta (Il1b) and thus decreasing the association between IL1B and its cellular receptor. The polypeptide is Interleukin-1-binding protein (OPG201) (Vaccinia virus (strain Ankara) (VACV)).